A 324-amino-acid chain; its full sequence is MRLLFAGTPQTALPSLRLLLESSHEVVAVLTRPDAPAGRGRTPRPSPVALAAEQAGLPVLKPRRLADPETLAALRSLNAELAVVVAYGALVPEPALAIPRHGWVNLHFSILPSWRGAAPVQHAILHGDEVTGATTFRLEPDLDTGPIYGTVTEPIRPDDTAGDLLNRLARTGARLLLDTVDGIAAGVLAPRPQPTEGVSYAPKITPADARISWSSPAFHVDRLIRAVTPEPGAWTTLAGRRIVLGPVRLAEPQHAPGATDDGSLAPGEIRVLAPGEIRVERDRVLVGTATTPVILGTVQPAGRRAMPAEAWARGARLAPGARFE.

A (6S)-5,6,7,8-tetrahydrofolate-binding site is contributed by 109 to 112; it reads SILP.

The protein belongs to the Fmt family.

The enzyme catalyses L-methionyl-tRNA(fMet) + (6R)-10-formyltetrahydrofolate = N-formyl-L-methionyl-tRNA(fMet) + (6S)-5,6,7,8-tetrahydrofolate + H(+). Its function is as follows. Attaches a formyl group to the free amino group of methionyl-tRNA(fMet). The formyl group appears to play a dual role in the initiator identity of N-formylmethionyl-tRNA by promoting its recognition by IF2 and preventing the misappropriation of this tRNA by the elongation apparatus. The polypeptide is Methionyl-tRNA formyltransferase (Acidothermus cellulolyticus (strain ATCC 43068 / DSM 8971 / 11B)).